The sequence spans 338 residues: Flap endonuclease 1 (338 aa).

Residues Met1–Lys98 form an N-domain region. Residues Asp27, Asp80, Glu152, Glu154, Asp173, Asp175, and Asp236 each contribute to the Mg(2+) site. Residues Lys116–Asn257 are I-domain. The interaction with PCNA stretch occupies residues His330 to Phe338.

The protein belongs to the XPG/RAD2 endonuclease family. FEN1 subfamily. As to quaternary structure, interacts with PCNA. PCNA stimulates the nuclease activity without altering cleavage specificity. It depends on Mg(2+) as a cofactor.

Its function is as follows. Structure-specific nuclease with 5'-flap endonuclease and 5'-3' exonuclease activities involved in DNA replication and repair. During DNA replication, cleaves the 5'-overhanging flap structure that is generated by displacement synthesis when DNA polymerase encounters the 5'-end of a downstream Okazaki fragment. Binds the unpaired 3'-DNA end and kinks the DNA to facilitate 5' cleavage specificity. Cleaves one nucleotide into the double-stranded DNA from the junction in flap DNA, leaving a nick for ligation. Also involved in the base excision repair (BER) pathway. Acts as a genome stabilization factor that prevents flaps from equilibrating into structures that lead to duplications and deletions. Also possesses 5'-3' exonuclease activity on nicked or gapped double-stranded DNA. The sequence is that of Flap endonuclease 1 from Picrophilus torridus (strain ATCC 700027 / DSM 9790 / JCM 10055 / NBRC 100828 / KAW 2/3).